The chain runs to 301 residues: tRNA uridine(34) hydroxylase (301 aa).

The 92-residue stretch at 121 to 212 (NDKDTLVLDS…YLKNIKKKES (92 aa)) folds into the Rhodanese domain. Cys172 serves as the catalytic Cysteine persulfide intermediate.

Belongs to the TrhO family.

The enzyme catalyses uridine(34) in tRNA + AH2 + O2 = 5-hydroxyuridine(34) in tRNA + A + H2O. Catalyzes oxygen-dependent 5-hydroxyuridine (ho5U) modification at position 34 in tRNAs. The polypeptide is tRNA uridine(34) hydroxylase (Pelagibacter ubique (strain HTCC1062)).